Here is a 329-residue protein sequence, read N- to C-terminus: Ribonucleoside-diphosphate reductase subunit beta (329 aa).

Aspartate 66, glutamate 97, and histidine 101 together coordinate Fe cation. The active site involves tyrosine 105. Fe cation contacts are provided by glutamate 164, glutamate 198, and histidine 201.

Belongs to the ribonucleoside diphosphate reductase small chain family. In terms of assembly, tetramer of two alpha and two beta subunits. It depends on Fe cation as a cofactor.

The enzyme catalyses a 2'-deoxyribonucleoside 5'-diphosphate + [thioredoxin]-disulfide + H2O = a ribonucleoside 5'-diphosphate + [thioredoxin]-dithiol. Its function is as follows. Provides the precursors necessary for DNA synthesis. Catalyzes the biosynthesis of deoxyribonucleotides from the corresponding ribonucleotides. The polypeptide is Ribonucleoside-diphosphate reductase subunit beta (bnrdF) (Bacillus pumilus (Bacillus mesentericus)).